The following is a 194-amino-acid chain: Molybdenum cofactor guanylyltransferase (194 aa).

Residues 12 to 14 (LAG), Lys-25, Asn-53, Asp-70, and Asp-100 each bind GTP. Mg(2+) is bound at residue Asp-100.

It belongs to the MobA family. Monomer. Mg(2+) serves as cofactor.

It localises to the cytoplasm. The enzyme catalyses Mo-molybdopterin + GTP + H(+) = Mo-molybdopterin guanine dinucleotide + diphosphate. Transfers a GMP moiety from GTP to Mo-molybdopterin (Mo-MPT) cofactor (Moco or molybdenum cofactor) to form Mo-molybdopterin guanine dinucleotide (Mo-MGD) cofactor. The sequence is that of Molybdenum cofactor guanylyltransferase from Aliivibrio fischeri (strain ATCC 700601 / ES114) (Vibrio fischeri).